Reading from the N-terminus, the 129-residue chain is HTH-type transcriptional regulator DdrOP3 (129 aa).

The region spanning 7 to 61 is the HTH cro/C1-type domain; it reads LRELRQERGLRLKDIAGAAQISVPYLSDLERGRTNPSLETLQSLASTYGITVHDL. A DNA-binding region (H-T-H motif) is located at residues 18–37; that stretch reads LKDIAGAAQISVPYLSDLER.

In terms of processing, cleaved between Leu-106 and Arg-107 by the IrrE metalloprotease after exposure to radiation. Cleavage inactivates DdrOP3, leading to derepression of the target genes.

In terms of biological role, repressor specific for genes preceded by a radiation/desiccation response motif (RDRM) site, which is present upstream of several radiation-induced genes. This is HTH-type transcriptional regulator DdrOP3 from Deinococcus deserti (strain DSM 17065 / CIP 109153 / LMG 22923 / VCD115).